Reading from the N-terminus, the 598-residue chain is Elongation factor 4 (598 aa).

A tr-type G domain is found at 2–184 (QHIRNFSIIA…AIVARVPAPK (183 aa)). GTP is bound by residues 14 to 19 (DHGKST) and 131 to 134 (NKID).

Belongs to the TRAFAC class translation factor GTPase superfamily. Classic translation factor GTPase family. LepA subfamily.

The protein localises to the cell inner membrane. The catalysed reaction is GTP + H2O = GDP + phosphate + H(+). In terms of biological role, required for accurate and efficient protein synthesis under certain stress conditions. May act as a fidelity factor of the translation reaction, by catalyzing a one-codon backward translocation of tRNAs on improperly translocated ribosomes. Back-translocation proceeds from a post-translocation (POST) complex to a pre-translocation (PRE) complex, thus giving elongation factor G a second chance to translocate the tRNAs correctly. Binds to ribosomes in a GTP-dependent manner. The sequence is that of Elongation factor 4 from Azoarcus sp. (strain BH72).